A 936-amino-acid chain; its full sequence is Isoleucine--tRNA ligase (936 aa).

Residues 58-68 (PYANGRAHLGT) carry the 'HIGH' region motif. An L-isoleucyl-5'-AMP-binding site is contributed by glutamate 561. Residues 602 to 606 (KMSKS) carry the 'KMSKS' region motif. An ATP-binding site is contributed by lysine 605. Positions 899, 902, 919, and 922 each coordinate Zn(2+).

Belongs to the class-I aminoacyl-tRNA synthetase family. IleS type 1 subfamily. As to quaternary structure, monomer. Requires Zn(2+) as cofactor.

Its subcellular location is the cytoplasm. It carries out the reaction tRNA(Ile) + L-isoleucine + ATP = L-isoleucyl-tRNA(Ile) + AMP + diphosphate. Catalyzes the attachment of isoleucine to tRNA(Ile). As IleRS can inadvertently accommodate and process structurally similar amino acids such as valine, to avoid such errors it has two additional distinct tRNA(Ile)-dependent editing activities. One activity is designated as 'pretransfer' editing and involves the hydrolysis of activated Val-AMP. The other activity is designated 'posttransfer' editing and involves deacylation of mischarged Val-tRNA(Ile). The sequence is that of Isoleucine--tRNA ligase from Coxiella burnetii (strain RSA 331 / Henzerling II).